A 274-amino-acid polypeptide reads, in one-letter code: Large ribosomal subunit protein uL2 (274 aa).

2 disordered regions span residues 28-53 (APYA…TVRH) and 223-274 (VAMN…RRNK). Positions 39–48 (KSGGRNNNGR) are enriched in low complexity.

Belongs to the universal ribosomal protein uL2 family. Part of the 50S ribosomal subunit. Forms a bridge to the 30S subunit in the 70S ribosome.

One of the primary rRNA binding proteins. Required for association of the 30S and 50S subunits to form the 70S ribosome, for tRNA binding and peptide bond formation. It has been suggested to have peptidyltransferase activity; this is somewhat controversial. Makes several contacts with the 16S rRNA in the 70S ribosome. The sequence is that of Large ribosomal subunit protein uL2 from Pseudoalteromonas atlantica (strain T6c / ATCC BAA-1087).